A 414-amino-acid polypeptide reads, in one-letter code: F-box protein At3g26010 (414 aa).

The 48-residue stretch at 5–52 folds into the F-box domain; it reads NRTIHLTDAIWTEILARLPLRIIARFKSVSKTWKSTIESVYFRRLFVS.

In Arabidopsis thaliana (Mouse-ear cress), this protein is F-box protein At3g26010.